Reading from the N-terminus, the 411-residue chain is Dihydrolipoyllysine-residue succinyltransferase component of 2-oxoglutarate dehydrogenase complex (411 aa).

The Lipoyl-binding domain maps to 2–77 (TTEIRVPTLG…EVNALLGAVE (76 aa)). K43 carries the post-translational modification N6-lipoyllysine. Positions 82-100 (SVAKSPSSSETSVSAAPSE) are enriched in low complexity. The segment at 82 to 115 (SVAKSPSSSETSVSAAPSELEQSSSSNTMPPAPS) is disordered. The span at 101–110 (LEQSSSSNTM) shows a compositional bias: polar residues. One can recognise a Peripheral subunit-binding (PSBD) domain in the interval 111-148 (PPAPSAAKLMAENNIAKSDILGSGKRGQILKEDVLNVL). Catalysis depends on residues H382 and D386.

This sequence belongs to the 2-oxoacid dehydrogenase family. As to quaternary structure, forms a 24-polypeptide structural core with octahedral symmetry. Part of the 2-oxoglutarate dehydrogenase (OGDH) complex composed of E1 (2-oxoglutarate dehydrogenase), E2 (dihydrolipoamide succinyltransferase) and E3 (dihydrolipoamide dehydrogenase); the complex contains multiple copies of the three enzymatic components (E1, E2 and E3). The cofactor is (R)-lipoate.

The catalysed reaction is N(6)-[(R)-dihydrolipoyl]-L-lysyl-[protein] + succinyl-CoA = N(6)-[(R)-S(8)-succinyldihydrolipoyl]-L-lysyl-[protein] + CoA. Its pathway is amino-acid degradation; L-lysine degradation via saccharopine pathway; glutaryl-CoA from L-lysine: step 6/6. E2 component of the 2-oxoglutarate dehydrogenase (OGDH) complex which catalyzes the second step in the conversion of 2-oxoglutarate to succinyl-CoA and CO(2). The chain is Dihydrolipoyllysine-residue succinyltransferase component of 2-oxoglutarate dehydrogenase complex (sucB) from Bartonella vinsonii subsp. berkhoffii.